The chain runs to 106 residues: Large ribosomal subunit protein uL24 (106 aa).

The protein belongs to the universal ribosomal protein uL24 family. As to quaternary structure, part of the 50S ribosomal subunit.

One of two assembly initiator proteins, it binds directly to the 5'-end of the 23S rRNA, where it nucleates assembly of the 50S subunit. Its function is as follows. One of the proteins that surrounds the polypeptide exit tunnel on the outside of the subunit. This Thermosipho africanus (strain TCF52B) protein is Large ribosomal subunit protein uL24.